Consider the following 271-residue polypeptide: Plasmanylethanolamine desaturase 1 (271 aa).

The interval 1–25 is disordered; that stretch reads MAGAEDAPGRQPELDEDETAEGRRW. 3 consecutive transmembrane segments (helical) span residues 48–68, 75–95, and 166–186; these read WCSV…LLLL, PLVI…SGLV, and LYPW…TNQI. Residues 187–191 carry the Histidine box-1 motif; that stretch reads HKWSH. The Histidine box-2 signature appears at 214–218; that stretch reads HHRIH.

This sequence belongs to the fatty acid desaturase CarF family.

It localises to the endoplasmic reticulum membrane. The catalysed reaction is a 1-(1,2-saturated alkyl)-2-acyl-sn-glycero-3-phosphoethanolamine + 2 Fe(II)-[cytochrome b5] + O2 + 2 H(+) = a 1-O-(1Z-alkenyl)-2-acyl-sn-glycero-3-phosphoethanolamine + 2 Fe(III)-[cytochrome b5] + 2 H2O. The enzyme catalyses a 1-O-hexadecyl-2-acyl-sn-glycero-3-phosphoethanolamine + 2 Fe(II)-[cytochrome b5] + O2 + 2 H(+) = a 1-O-(1Z-hexadecenyl)-2-acyl-sn-glycero-3-phosphoethanolamine + 2 Fe(III)-[cytochrome b5] + 2 H2O. It carries out the reaction a 1-O-octadecyl-2-acyl-sn-glycero-3-phosphoethanolamine + 2 Fe(II)-[cytochrome b5] + O2 + 2 H(+) = a 1-O-(1Z-octadecenyl)-2-acyl-sn-glycero-3-phosphoethanolamine + 2 Fe(III)-[cytochrome b5] + 2 H2O. It catalyses the reaction a 1-O-(9Z-octadecenyl)-2-acyl-sn-glycero-3-phosphoethanolamine + 2 Fe(II)-[cytochrome b5] + O2 + 2 H(+) = a 1-O-(1Z,9Z-octadecadienyl)-2-acyl-sn-glycero-3-phosphoethanolamine + 2 Fe(III)-[cytochrome b5] + 2 H2O. It functions in the pathway lipid metabolism; fatty acid metabolism. Plasmanylethanolamine desaturase involved in plasmalogen biogenesis in the endoplasmic reticulum membrane. Plasmalogens are glycerophospholipids with a hydrocarbon chain linked by a vinyl ether bond at the glycerol sn-1 position, and are involved in antioxidative and signaling mechanisms. The sequence is that of Plasmanylethanolamine desaturase 1 from Mus musculus (Mouse).